The primary structure comprises 186 residues: ATP synthase subunit delta (186 aa).

The protein belongs to the ATPase delta chain family. In terms of assembly, F-type ATPases have 2 components, F(1) - the catalytic core - and F(0) - the membrane proton channel. F(1) has five subunits: alpha(3), beta(3), gamma(1), delta(1), epsilon(1). F(0) has three main subunits: a(1), b(2) and c(10-14). The alpha and beta chains form an alternating ring which encloses part of the gamma chain. F(1) is attached to F(0) by a central stalk formed by the gamma and epsilon chains, while a peripheral stalk is formed by the delta and b chains.

Its subcellular location is the cell membrane. F(1)F(0) ATP synthase produces ATP from ADP in the presence of a proton or sodium gradient. F-type ATPases consist of two structural domains, F(1) containing the extramembraneous catalytic core and F(0) containing the membrane proton channel, linked together by a central stalk and a peripheral stalk. During catalysis, ATP synthesis in the catalytic domain of F(1) is coupled via a rotary mechanism of the central stalk subunits to proton translocation. In terms of biological role, this protein is part of the stalk that links CF(0) to CF(1). It either transmits conformational changes from CF(0) to CF(1) or is implicated in proton conduction. The polypeptide is ATP synthase subunit delta (Mycoplasmopsis agalactiae (strain NCTC 10123 / CIP 59.7 / PG2) (Mycoplasma agalactiae)).